The following is a 294-amino-acid chain: Pyridoxal 5'-phosphate synthase subunit PdxS (294 aa).

Asp-24 contacts D-ribose 5-phosphate. Lys-81 functions as the Schiff-base intermediate with D-ribose 5-phosphate in the catalytic mechanism. Gly-153 contributes to the D-ribose 5-phosphate binding site. D-glyceraldehyde 3-phosphate is bound at residue Arg-165. D-ribose 5-phosphate is bound by residues Gly-214 and 235-236 (GS).

The protein belongs to the PdxS/SNZ family. In terms of assembly, in the presence of PdxT, forms a dodecamer of heterodimers.

It carries out the reaction aldehydo-D-ribose 5-phosphate + D-glyceraldehyde 3-phosphate + L-glutamine = pyridoxal 5'-phosphate + L-glutamate + phosphate + 3 H2O + H(+). It participates in cofactor biosynthesis; pyridoxal 5'-phosphate biosynthesis. Catalyzes the formation of pyridoxal 5'-phosphate from ribose 5-phosphate (RBP), glyceraldehyde 3-phosphate (G3P) and ammonia. The ammonia is provided by the PdxT subunit. Can also use ribulose 5-phosphate and dihydroxyacetone phosphate as substrates, resulting from enzyme-catalyzed isomerization of RBP and G3P, respectively. In Anoxybacillus flavithermus (strain DSM 21510 / WK1), this protein is Pyridoxal 5'-phosphate synthase subunit PdxS.